The following is a 515-amino-acid chain: MTDATVAKIPHVLVIMDGIGHREAIKDNAFLAAKTPSLSMMKQKHPHSLISGSGEDVGLPDGQMGNSEVGHMNLGAGRVLYQDFTRITKDIRDGVFFEHEVLVDAVEKAKAVHGAVHIMGLLSEGGVHSHEDHIVAMCELALKRGATVYLHAFLDGRDTPPKSAQPSLEKLDALFAQYPEQGRIVSMIGRYFAMDRDNRWDRVEQAYRLLTESEAVRTAQSAVQGLELAYAAGESDEFVKATRIGDAVAVQDGDSIVFMNFRADRARELTRAFVEHDFSGFTRQRIPHLSKFVMLTRYQATIDAPVAYMPEALHNSIGEYLSNLGKTQLRIAETEKYAHVTFFFSGGREDEYPGEKRILIPSPNVATYDLKPEMSAYEVTDQLVNAIDSGEFDLLVVNYANGDMVGHTGIFDAAVKAVEAVDTCLGRVYQAVMAKHGHMIITADHGNVEQMQDYQSGQVHTQHTTELVPFIYVGPTQAVIAEGGVLADVAPTLLNLMQLPVPAEMQGRNLITLSS.

Positions 17 and 67 each coordinate Mn(2+). Ser67 (phosphoserine intermediate) is an active-site residue. Substrate-binding positions include His128, 157 to 158, Arg190, Arg196, 262 to 265, and Lys336; these read RD and RADR. The Mn(2+) site is built by Asp403, His407, Asp444, His445, and His463.

The protein belongs to the BPG-independent phosphoglycerate mutase family. In terms of assembly, monomer. Requires Mn(2+) as cofactor.

The enzyme catalyses (2R)-2-phosphoglycerate = (2R)-3-phosphoglycerate. The protein operates within carbohydrate degradation; glycolysis; pyruvate from D-glyceraldehyde 3-phosphate: step 3/5. Its function is as follows. Catalyzes the interconversion of 2-phosphoglycerate and 3-phosphoglycerate. This is 2,3-bisphosphoglycerate-independent phosphoglycerate mutase from Acinetobacter baylyi (strain ATCC 33305 / BD413 / ADP1).